A 99-amino-acid polypeptide reads, in one-letter code: Small ribosomal subunit protein uS17 (99 aa).

This sequence belongs to the universal ribosomal protein uS17 family. In terms of assembly, part of the 30S ribosomal subunit.

Functionally, one of the primary rRNA binding proteins, it binds specifically to the 5'-end of 16S ribosomal RNA. This chain is Small ribosomal subunit protein uS17, found in Thermosipho melanesiensis (strain DSM 12029 / CIP 104789 / BI429).